A 166-amino-acid chain; its full sequence is Small ribosomal subunit protein uS5 (166 aa).

In terms of domain architecture, S5 DRBM spans 12-75; that stretch reads YIEKLVQVNR…EAARRNMIQV (64 aa).

Belongs to the universal ribosomal protein uS5 family. As to quaternary structure, part of the 30S ribosomal subunit. Contacts proteins S4 and S8.

In terms of biological role, with S4 and S12 plays an important role in translational accuracy. Located at the back of the 30S subunit body where it stabilizes the conformation of the head with respect to the body. The chain is Small ribosomal subunit protein uS5 from Pseudomonas entomophila (strain L48).